A 298-amino-acid polypeptide reads, in one-letter code: Arginine/serine-rich protein 1 (298 aa).

Positions 1–135 (MSSAAMSKYV…SRSRSRGRSQ (135 aa)) are disordered. Position 17 is a phosphoserine (S17). Low complexity predominate over residues 23-36 (SPSTSGSGRSSRLS). The span at 60 to 105 (SRSHSRPRRSRRSRSRSRRRHQRKYRRYSRSYSRSRSRSRSHRYHR) shows a compositional bias: basic residues. Phosphoserine is present on residues S118 and S120. The span at 124–135 (SRSRSRSRGRSQ) shows a compositional bias: basic residues. Position 145 is an omega-N-methylarginine (R145). Disordered stretches follow at residues 161–181 (RPRW…TPFR) and 218–298 (ASQG…WIPV). The segment covering 219-228 (SQGTAVSSSG) has biased composition (polar residues). Basic and acidic residues predominate over residues 230-246 (KVEHSEKQTEDATKNTS). Over residues 247 to 271 (EKSSTQRNIAFSSNNSVAKPLQKTT) the composition is skewed to polar residues. Positions 274–289 (AVEEKSSGSPKIDKKK) are enriched in basic and acidic residues. S282 carries the phosphoserine modification.

Belongs to the RSRP family. Phosphorylated. Phosphorylation at Ser-118 and Ser-120 mediates the interaction with spliceosome proteins.

The protein resides in the nucleus. Probably acts as a spliceosomal factor that contributes to spliceosome assembly and regulates the isoform switching of proteins such as PARP6. The protein is Arginine/serine-rich protein 1 (Rsrp1) of Mus musculus (Mouse).